A 31-amino-acid chain; its full sequence is Cytochrome b6-f complex subunit 6 (31 aa).

The chain crosses the membrane as a helical span at residues 4–26; sequence ITSYFGFLLAALTVTSALFIGLS.

Belongs to the PetL family. In terms of assembly, the 4 large subunits of the cytochrome b6-f complex are cytochrome b6, subunit IV (17 kDa polypeptide, PetD), cytochrome f and the Rieske protein, while the 4 small subunits are PetG, PetL, PetM and PetN. The complex functions as a dimer.

The protein localises to the plastid. It is found in the chloroplast thylakoid membrane. Component of the cytochrome b6-f complex, which mediates electron transfer between photosystem II (PSII) and photosystem I (PSI), cyclic electron flow around PSI, and state transitions. PetL is important for photoautotrophic growth as well as for electron transfer efficiency and stability of the cytochrome b6-f complex. The sequence is that of Cytochrome b6-f complex subunit 6 from Daucus carota (Wild carrot).